A 172-amino-acid chain; its full sequence is Cytochrome b6-f complex iron-sulfur subunit (172 aa).

Residues 19–39 (LNALLSGSVGVVVVGALYPVV) traverse the membrane as a helical segment. Residues 61–161 (GKPISVSELL…ATVDGDNVRF (101 aa)) form the Rieske domain. Positions 107, 109, 125, and 128 each coordinate [2Fe-2S] cluster. A disulfide bridge connects residues cysteine 112 and cysteine 127.

The protein belongs to the Rieske iron-sulfur protein family. The 4 large subunits of the cytochrome b6-f complex are cytochrome b6, subunit IV (17 kDa polypeptide, PetD), cytochrome f and the Rieske protein, while the 4 small subunits are PetG, PetL, PetM and PetN. The complex functions as a dimer. It depends on [2Fe-2S] cluster as a cofactor.

Its subcellular location is the cellular thylakoid membrane. It catalyses the reaction 2 oxidized [plastocyanin] + a plastoquinol + 2 H(+)(in) = 2 reduced [plastocyanin] + a plastoquinone + 4 H(+)(out). Component of the cytochrome b6-f complex, which mediates electron transfer between photosystem II (PSII) and photosystem I (PSI), cyclic electron flow around PSI, and state transitions. The sequence is that of Cytochrome b6-f complex iron-sulfur subunit from Synechococcus sp. (strain JA-2-3B'a(2-13)) (Cyanobacteria bacterium Yellowstone B-Prime).